We begin with the raw amino-acid sequence, 757 residues long: Xaa-Pro dipeptidyl-peptidase (757 aa).

Active-site charge relay system residues include Ser348, Asp468, and His498.

Belongs to the peptidase S15 family. In terms of assembly, homodimer.

The protein localises to the cytoplasm. It carries out the reaction Hydrolyzes Xaa-Pro-|- bonds to release unblocked, N-terminal dipeptides from substrates including Ala-Pro-|-p-nitroanilide and (sequentially) Tyr-Pro-|-Phe-Pro-|-Gly-Pro-|-Ile.. In terms of biological role, removes N-terminal dipeptides sequentially from polypeptides having unsubstituted N-termini provided that the penultimate residue is proline. In Streptococcus pneumoniae (strain ATCC 700669 / Spain 23F-1), this protein is Xaa-Pro dipeptidyl-peptidase.